We begin with the raw amino-acid sequence, 247 residues long: Uridylate kinase (247 aa).

16-19 (KLSG) contributes to the ATP binding site. A UMP-binding site is contributed by glycine 58. ATP contacts are provided by glycine 59 and arginine 63. UMP-binding positions include aspartate 78 and 139–146 (TGNPFFTT). 3 residues coordinate ATP: threonine 166, tyrosine 172, and aspartate 175.

The protein belongs to the UMP kinase family. As to quaternary structure, homohexamer.

Its subcellular location is the cytoplasm. The catalysed reaction is UMP + ATP = UDP + ADP. Its pathway is pyrimidine metabolism; CTP biosynthesis via de novo pathway; UDP from UMP (UMPK route): step 1/1. Its activity is regulated as follows. Inhibited by UTP. Its function is as follows. Catalyzes the reversible phosphorylation of UMP to UDP. In Xylella fastidiosa (strain Temecula1 / ATCC 700964), this protein is Uridylate kinase.